The sequence spans 262 residues: MLDPIAIQLGPLAIRWYALCIVTGLILAVYLTMKEAPRKKIIPDDILDFILVAFPLAILGARLYYVIFRFDYYSQNLGEIFAIWNGGLAIYGGLITGALVLYIFADRKLINTWDFLDIAAPSVMIAQSLGRWGNFFNQEAYGATVDNLDYLPGFIRDQMYIEGSYRQPTFLYESLWNLLGFALILIFRRKWKSLRRGHITAFYLIWYGFGRMVIEGMRTDSLMFFGFRVSQWLSVVLIGLGIMIVIYQNRKKAPYYITEEEN.

Helical transmembrane passes span 9 to 29, 41 to 61, 80 to 100, and 109 to 129; these read LGPLAIRWYALCIVTGLILAV, IIPDDILDFILVAFPLAILGA, IFAIWNGGLAIYGGLITGALV, and LINTWDFLDIAAPSVMIAQSL. Residue Arg131 coordinates a 1,2-diacyl-sn-glycero-3-phospho-(1'-sn-glycerol). The next 3 helical transmembrane spans lie at 167–187, 197–217, and 226–246; these read QPTFLYESLWNLLGFALILIF, GHITAFYLIWYGFGRMVIEGM, and GFRVSQWLSVVLIGLGIMIVI.

Belongs to the Lgt family.

It is found in the cell membrane. It carries out the reaction L-cysteinyl-[prolipoprotein] + a 1,2-diacyl-sn-glycero-3-phospho-(1'-sn-glycerol) = an S-1,2-diacyl-sn-glyceryl-L-cysteinyl-[prolipoprotein] + sn-glycerol 1-phosphate + H(+). It functions in the pathway protein modification; lipoprotein biosynthesis (diacylglyceryl transfer). Functionally, catalyzes the transfer of the diacylglyceryl group from phosphatidylglycerol to the sulfhydryl group of the N-terminal cysteine of a prolipoprotein, the first step in the formation of mature lipoproteins. The chain is Phosphatidylglycerol--prolipoprotein diacylglyceryl transferase from Streptococcus pneumoniae serotype 4 (strain ATCC BAA-334 / TIGR4).